The following is a 544-amino-acid chain: Chaperonin GroEL (544 aa).

Residues 30–33, lysine 51, 87–91, glycine 415, and aspartate 495 each bind ATP; these read TLGP and DGTTT.

Belongs to the chaperonin (HSP60) family. In terms of assembly, forms a cylinder of 14 subunits composed of two heptameric rings stacked back-to-back. Interacts with the co-chaperonin GroES.

The protein resides in the cell outer membrane. The catalysed reaction is ATP + H2O + a folded polypeptide = ADP + phosphate + an unfolded polypeptide.. Functionally, together with its co-chaperonin GroES, plays an essential role in assisting protein folding. The GroEL-GroES system forms a nano-cage that allows encapsulation of the non-native substrate proteins and provides a physical environment optimized to promote and accelerate protein folding. This Neisseria gonorrhoeae protein is Chaperonin GroEL.